Reading from the N-terminus, the 300-residue chain is CDAN1-interacting nuclease 1 (300 aa).

It is found in the nucleus. It localises to the cytoplasm. Its function is as follows. May play a role in erythroid cell differentiation. This Danio rerio (Zebrafish) protein is CDAN1-interacting nuclease 1 (cdin1).